A 229-amino-acid chain; its full sequence is Ribonuclease 3 (229 aa).

The region spanning 2 to 130 is the RNase III domain; it reads FEKLQDVLCY…ILGAIFLDGG (129 aa). Glu43 lines the Mg(2+) pocket. The active site involves Asp47. Residues Asp116 and Glu119 each contribute to the Mg(2+) site. Residue Glu119 is part of the active site. The DRBM domain occupies 157-226; sequence DAKSTLQELT…AGLALELLEG (70 aa).

Belongs to the ribonuclease III family. As to quaternary structure, homodimer. It depends on Mg(2+) as a cofactor.

The protein localises to the cytoplasm. The enzyme catalyses Endonucleolytic cleavage to 5'-phosphomonoester.. Digests double-stranded RNA. Involved in the processing of primary rRNA transcript to yield the immediate precursors to the large and small rRNAs (23S and 16S). Processes some mRNAs, and tRNAs when they are encoded in the rRNA operon. Processes pre-crRNA and tracrRNA of type II CRISPR loci if present in the organism. This is Ribonuclease 3 from Oleidesulfovibrio alaskensis (strain ATCC BAA-1058 / DSM 17464 / G20) (Desulfovibrio alaskensis).